Consider the following 202-residue polypeptide: MDTQALSDLAAHIEGRMPDAVRSWQIHVGELTLLAERDHIVPLLRFLRDDQQCNFETFIDVCGVDYPERSERFEVVYHLLSMRMNHRIRVRIRTDEETAVPSVVSLWPAANWFEREAFDMYGIQFADHPDLRRILTDYGFEGWPLRKDFPLTGHYEVRYDDLEKRVIYEPVKLAQEYRNFDFLSPWEGMTTVIPGDEKAKEG.

It belongs to the complex I 30 kDa subunit family. In terms of assembly, NDH-1 is composed of 14 different subunits. Subunits NuoB, C, D, E, F, and G constitute the peripheral sector of the complex.

The protein localises to the cell inner membrane. It carries out the reaction a quinone + NADH + 5 H(+)(in) = a quinol + NAD(+) + 4 H(+)(out). Functionally, NDH-1 shuttles electrons from NADH, via FMN and iron-sulfur (Fe-S) centers, to quinones in the respiratory chain. The immediate electron acceptor for the enzyme in this species is believed to be ubiquinone. Couples the redox reaction to proton translocation (for every two electrons transferred, four hydrogen ions are translocated across the cytoplasmic membrane), and thus conserves the redox energy in a proton gradient. This chain is NADH-quinone oxidoreductase subunit C, found in Hyphomonas neptunium (strain ATCC 15444).